Here is a 447-residue protein sequence, read N- to C-terminus: Rab GDP dissociation inhibitor alpha (447 aa).

Ser427 carries the post-translational modification Phosphoserine.

The protein belongs to the Rab GDI family. Interacts with RHOH. Interacts with the non-phosphorylated forms of RAB1A, RAB3A, RAB5A, RAB5B, RAB5C, RAB8A, RAB8B, RAB12, RAB35, and RAB43. Interacts with RAB10. As to expression, high expression in brain, lower in other tissues.

It is found in the cytoplasm. It localises to the golgi apparatus. Its subcellular location is the trans-Golgi network. Functionally, regulates the GDP/GTP exchange reaction of most Rab proteins by inhibiting the dissociation of GDP from them, and the subsequent binding of GTP to them. Promotes the dissociation of GDP-bound Rab proteins from the membrane and inhibits their activation. Promotes the dissociation of RAB1A, RAB3A, RAB5A and RAB10 from membranes. This chain is Rab GDP dissociation inhibitor alpha (Gdi1), found in Mus musculus (Mouse).